We begin with the raw amino-acid sequence, 919 residues long: Probable dipeptidyl-aminopeptidase B (919 aa).

The span at 1–10 (MRPSDDHGET) shows a compositional bias: basic and acidic residues. Residues 1-50 (MRPSDDHGETSEFLPITRSRSVSAASQTSTDSSLSTESLFPGEQKPFPNV) form a disordered region. Residues 1-92 (MRPSDDHGET…AATGGGRARR (92 aa)) lie on the Cytoplasmic side of the membrane. Over residues 21-38 (SVSAASQTSTDSSLSTES) the composition is skewed to low complexity. A helical; Signal-anchor for type II membrane protein transmembrane segment spans residues 93–113 (IFWILVLLCLGGWLLAFALFL). The Vacuolar portion of the chain corresponds to 114-919 (TGGRANYQTA…MKRSLPLLYP (806 aa)). Asn200, Asn352, and Asn643 each carry an N-linked (GlcNAc...) asparagine glycan. Ser757 acts as the Charge relay system in catalysis. A glycan (N-linked (GlcNAc...) asparagine) is linked at Asn811. Catalysis depends on charge relay system residues Asp834 and His867.

It belongs to the peptidase S9B family.

The protein localises to the vacuole membrane. The enzyme catalyses Release of an N-terminal dipeptide, Xaa-Yaa-|-Zaa-, from a polypeptide, preferentially when Yaa is Pro, provided Zaa is neither Pro nor hydroxyproline.. In terms of biological role, type IV dipeptidyl-peptidase which removes N-terminal dipeptides sequentially from polypeptides having unsubstituted N-termini provided that the penultimate residue is proline. This Neosartorya fischeri (strain ATCC 1020 / DSM 3700 / CBS 544.65 / FGSC A1164 / JCM 1740 / NRRL 181 / WB 181) (Aspergillus fischerianus) protein is Probable dipeptidyl-aminopeptidase B (dapB).